We begin with the raw amino-acid sequence, 431 residues long: Neuronal pentraxin-2 (431 aa).

An N-terminal signal peptide occupies residues 1–15; the sequence is MLALLAASVALAVAA. Asn148 and Asn189 each carry an N-linked (GlcNAc...) asparagine glycan. The 202-residue stretch at 223-424 folds into the Pentraxin (PTX) domain; sequence DAFKVSLPLR…GASKWPVETC (202 aa). A disulfide bond links Cys253 and Cys313. Residues Asn277, Glu355, Gln356, Asp357, and Gln367 each coordinate Ca(2+). Residue Asn393 is glycosylated (N-linked (GlcNAc...) asparagine).

As to quaternary structure, homooligomer or heterooligomer (probably pentamer) with neuronal pentraxin receptor (NPTXR). The cofactor is Ca(2+). In terms of tissue distribution, brain, pancreas, liver, heart and skeletal muscle. Highest levels are seen in the testis.

The protein resides in the secreted. In terms of biological role, likely to play role in the modification of cellular properties that underlie long-term plasticity. Binds to agar matrix in a calcium-dependent manner. This is Neuronal pentraxin-2 (NPTX2) from Homo sapiens (Human).